A 52-amino-acid chain; its full sequence is Insulin (52 aa).

Cystine bridges form between Cys7–Cys38, Cys19–Cys51, and Cys37–Cys42.

It belongs to the insulin family. Heterodimer of a B chain and an A chain linked by two disulfide bonds.

The protein localises to the secreted. Functionally, insulin decreases blood glucose concentration. It increases cell permeability to monosaccharides, amino acids and fatty acids. It accelerates glycolysis, the pentose phosphate cycle, and glycogen synthesis in liver. The chain is Insulin (ins) from Acipenser gueldenstaedtii (Russian sturgeon).